A 470-amino-acid chain; its full sequence is Probable G-protein coupled receptor 152 (470 aa).

The tract at residues 1-25 (MDTTMEADLGATGHRPRTELDDEDS) is disordered. Over 1–33 (MDTTMEADLGATGHRPRTELDDEDSYPQGGWDT) the chain is Extracellular. The chain crosses the membrane as a helical span at residues 34–54 (VFLVALLLLGLPANGLMAWLA). The Cytoplasmic segment spans residues 55–65 (GSQARHGAGTR). A helical transmembrane segment spans residues 66-86 (LALLLLSLALSDFLFLAAAAF). The Extracellular portion of the chain corresponds to 87–105 (QILEIRHGGHWPLGTAACR). Residues cysteine 104 and cysteine 182 are joined by a disulfide bond. A helical transmembrane segment spans residues 106 to 126 (FYYFLWGVSYSSGLFLLAALS). The Cytoplasmic portion of the chain corresponds to 127-148 (LDRCLLALCPHWYPGHRPVRLP). Residues 149–169 (LWVCAGVWVLATLFSVPWLVF) traverse the membrane as a helical segment. Topologically, residues 170 to 194 (PEAAVWWYDLVICLDFWDSEELSLR) are extracellular. A helical transmembrane segment spans residues 195–215 (MLEVLGGFLPFLLLLVCHVLT). Topologically, residues 216–257 (QATACRTCHRQQQPAACRGFARVARTILSAYVVLRLPYQLAQ) are cytoplasmic. A helical membrane pass occupies residues 258–278 (LLYLAFLWDVYSGYLLWEALV). Over 279–281 (YSD) the chain is Extracellular. The chain crosses the membrane as a helical span at residues 282–302 (YLILLNSCLSPFLCLMASADL). The Cytoplasmic portion of the chain corresponds to 303–470 (RTLLRSVLSS…PEAAPGAGPT (168 aa)). The interval 322–470 (PGSFTPTEPQ…PEAAPGAGPT (149 aa)) is disordered. 2 stretches are compositionally biased toward polar residues: residues 325–335 (FTPTEPQTQLD) and 348–414 (AQSQ…NVQT). Residues 415-425 (PAPAASSVPSP) are compositionally biased toward low complexity.

The protein belongs to the G-protein coupled receptor 1 family.

It localises to the cell membrane. Functionally, orphan receptor. The polypeptide is Probable G-protein coupled receptor 152 (GPR152) (Homo sapiens (Human)).